The following is a 356-amino-acid chain: Outer membrane protein Omp38 (356 aa).

A signal peptide spans 1–19 (MKLSRIALATMLVAAPLAA). Residues 221 to 339 (ELTEDLNMEL…RVFATITGSR (119 aa)) enclose the OmpA-like domain.

This sequence belongs to the outer membrane OOP (TC 1.B.6) superfamily. In terms of assembly, homotrimer.

The protein resides in the cell outer membrane. In terms of biological role, porin. Induces apoptosis in human cells through caspases-dependent and AIF-dependent pathways. Purified Omp38 enters the cells and localizes to the mitochondria, which leads to a release of proapoptotic molecules such as cytochrome c and AIF (apoptosis-inducing factor). In Acinetobacter baumannii (strain ATCC 17978 / DSM 105126 / CIP 53.77 / LMG 1025 / NCDC KC755 / 5377), this protein is Outer membrane protein Omp38 (omp38).